The primary structure comprises 446 residues: Glutamine synthetase (446 aa).

The GS beta-grasp domain maps to 15 to 103 (ENVKFLRLQI…LICDVYYPDG (89 aa)). A GS catalytic domain is found at 110-446 (PRYVLKRQIE…WELDRYLATY (337 aa)). Positions 134 and 136 each coordinate Mg(2+). Residue Glu186 coordinates ATP. Mg(2+) contacts are provided by Glu191 and Glu198. Residues 242–243 (NG) and Gly243 contribute to the L-glutamate site. His247 contacts Mg(2+). ATP is bound at residue Ser251. The L-glutamate site is built by Arg300, Glu306, and Arg318. 2 residues coordinate ATP: Arg318 and Arg323. Glu335 provides a ligand contact to Mg(2+). Arg337 is an L-glutamate binding site.

This sequence belongs to the glutamine synthetase family. Interacts with GCBP (TTHA1554). Mg(2+) serves as cofactor.

The protein localises to the cytoplasm. The enzyme catalyses L-glutamate + NH4(+) + ATP = L-glutamine + ADP + phosphate + H(+). With respect to regulation, activity increases by approximately two-fold in the presence of GCBP. Its function is as follows. Catalyzes the ATP-dependent biosynthesis of glutamine from glutamate and ammonia. In Thermus thermophilus (strain ATCC 27634 / DSM 579 / HB8), this protein is Glutamine synthetase.